Reading from the N-terminus, the 634-residue chain is Sodium-dependent neutral amino acid transporter B(0)AT1 (634 aa).

Residues 1 to 41 (MVRLVLPNPGLEDRIPSLDELEVIEKEEASSRPKWDNKAQY) lie on the Cytoplasmic side of the membrane. The residue at position 17 (Ser-17) is a Phosphoserine. A helical membrane pass occupies residues 42-62 (MLTCVGFCVGLGNVWRFPYLC). The Extracellular segment spans residues 63–65 (QSH). The helical transmembrane segment at 66 to 86 (GGGAFMIPFLILLVLEGIPLL) threads the bilayer. Residues 87–119 (HLEFAIGQRLRKGSVGVWSSIHPALKGVGIASM) are Cytoplasmic-facing. The chain crosses the membrane as a helical span at residues 120–140 (FVSFMVGLYYNTIIAWVMWYF). Residues 141-192 (FNSFQEPLPWSECPLNQNQTGYVEECAKSSSVDYFWYRETLNISTSISDSGS) lie on the Extracellular side of the membrane. N-linked (GlcNAc...) asparagine glycans are attached at residues Asn-158 and Asn-182. A helical membrane pass occupies residues 193–213 (IQWWILLCLTCAWSVLYVCTI). Residues 214–221 (RGIETTGK) are Cytoplasmic-facing. Residues 222 to 242 (AVYITSTLPYVVLTIFLIRGL) traverse the membrane as a helical segment. Residues 243 to 268 (TLKGATNGIVFLFTPNITELSNPNTW) lie on the Extracellular side of the membrane. The N-linked (GlcNAc...) asparagine glycan is linked to Asn-258. Residues 269–289 (LDAGAQVFYSFSLAFGGLISF) form a helical membrane-spanning segment. Topologically, residues 290-304 (SSYNSVHNNCEMDSV) are cytoplasmic. Residues 305 to 325 (IVSIINGFTSVYAATVVYSII) traverse the membrane as a helical segment. Residues 326 to 413 (GFRATERFDD…TEAITKMPVS (88 aa)) lie on the Extracellular side of the membrane. N-linked (GlcNAc...) asparagine glycosylation is found at Asn-354 and Asn-368. Residues 414 to 434 (PLWSVLFFIMLFCLGLSSMFG) form a helical membrane-spanning segment. Residues 435-456 (NMEGVVVPLQDLNITPKKWPKE) lie on the Cytoplasmic side of the membrane. The chain crosses the membrane as a helical span at residues 457-477 (LLTGLICLGTYLIAFIFTLNS). At 478–490 (GQYWLSLLDSYAG) the chain is on the extracellular side. Residues 491-511 (SIPLLIIAFCEMFAVVYVYGV) form a helical membrane-spanning segment. The Cytoplasmic segment spans residues 512–531 (DRFNKDIEFMIGHKPNIFWQ). Residues 532 to 552 (VTWRVVSPLIMLVIFLFFFVI) form a helical membrane-spanning segment. At 553-581 (EVNKQLMYSVWDPDYEEFPKSQKVPYPDW) the chain is on the extracellular side. Residues 582-602 (VYAVVVIVAGVPCLTIPCFAI) form a helical membrane-spanning segment. The Cytoplasmic segment spans residues 603-634 (YKLIRNYCQKSGDQHGLVNALSTASVNGDLKN). At Ser-627 the chain carries Phosphoserine.

This sequence belongs to the sodium:neurotransmitter symporter (SNF) (TC 2.A.22) family. SLC6A19 subfamily. Interacts in a tissue-specific manner with ACE2 in small intestine and with CLTRN in the kidney. Interacts with CLTRN; this interaction is required for trafficking of SLC6A19 to the plasma membrane and for its catalytic activation in kidneys. Interacts with ACE2; this interaction is required for trafficking of SLC6A19 to the plasma membrane and for its catalytic activation in intestine. Interacts with ANPEP; the interaction positively regulates its amino acid transporter activity.

The protein resides in the membrane. It catalyses the reaction L-alanine(in) + Na(+)(in) = L-alanine(out) + Na(+)(out). It carries out the reaction L-cysteine(in) + Na(+)(in) = L-cysteine(out) + Na(+)(out). The enzyme catalyses L-glutamine(in) + Na(+)(in) = L-glutamine(out) + Na(+)(out). The catalysed reaction is glycine(in) + Na(+)(in) = glycine(out) + Na(+)(out). It catalyses the reaction L-isoleucine(in) + Na(+)(in) = L-isoleucine(out) + Na(+)(out). It carries out the reaction L-leucine(in) + Na(+)(in) = L-leucine(out) + Na(+)(out). The enzyme catalyses L-methionine(in) + Na(+)(in) = L-methionine(out) + Na(+)(out). The catalysed reaction is L-phenylalanine(in) + Na(+)(in) = L-phenylalanine(out) + Na(+)(out). It catalyses the reaction L-serine(in) + Na(+)(in) = L-serine(out) + Na(+)(out). It carries out the reaction L-tryptophan(in) + Na(+)(in) = L-tryptophan(out) + Na(+)(out). The enzyme catalyses L-tyrosine(in) + Na(+)(in) = L-tyrosine(out) + Na(+)(out). The catalysed reaction is L-valine(in) + Na(+)(in) = L-valine(out) + Na(+)(out). In terms of biological role, transporter that mediates resorption of neutral amino acids across the apical membrane of renal and intestinal epithelial cells. This uptake is sodium-dependent and chloride-independent. Requires CLTRN in kidney or ACE2 in intestine for cell surface expression and amino acid transporter activity. This chain is Sodium-dependent neutral amino acid transporter B(0)AT1, found in Rattus norvegicus (Rat).